We begin with the raw amino-acid sequence, 137 residues long: Large ribosomal subunit protein uL16 (137 aa).

Over residues 1–14 (MLQPNRRKFRKEHK) the composition is skewed to basic residues. The interval 1-22 (MLQPNRRKFRKEHKGRNEGLAT) is disordered.

This sequence belongs to the universal ribosomal protein uL16 family. Part of the 50S ribosomal subunit.

Binds 23S rRNA and is also seen to make contacts with the A and possibly P site tRNAs. This is Large ribosomal subunit protein uL16 from Dechloromonas aromatica (strain RCB).